A 237-amino-acid polypeptide reads, in one-letter code: Ribonuclease 3 (237 aa).

Positions 4 to 133 constitute an RNase III domain; it reads LTELENSLGV…VLAAIYIDKG (130 aa). Glutamate 46 provides a ligand contact to Mg(2+). Catalysis depends on residues aspartate 50 and glutamate 122. Glutamate 122 serves as a coordination point for Mg(2+). The region spanning 160 to 229 is the DRBM domain; it reads DYKSRLQELI…AKVALQQFEN (70 aa).

Belongs to the ribonuclease III family. Homodimer. It depends on Mg(2+) as a cofactor.

It is found in the cytoplasm. It carries out the reaction Endonucleolytic cleavage to 5'-phosphomonoester.. Digests double-stranded RNA. Involved in the processing of primary rRNA transcript to yield the immediate precursors to the large and small rRNAs (23S and 16S). Processes some mRNAs, and tRNAs when they are encoded in the rRNA operon. Processes pre-crRNA and tracrRNA of type II CRISPR loci if present in the organism. The protein is Ribonuclease 3 of Dehalococcoides mccartyi (strain CBDB1).